A 386-amino-acid chain; its full sequence is Succinate--CoA ligase [ADP-forming] subunit beta (386 aa).

An ATP-grasp domain is found at 9–244 (KEILRKYGVP…HDEEDPLETR (236 aa)). Residues Lys46, 53–55 (GRG), Glu99, Cys102, and Glu107 each bind ATP. 2 residues coordinate Mg(2+): Asn199 and Asp213. Residues Asn264 and 321–323 (GIM) contribute to the substrate site.

Belongs to the succinate/malate CoA ligase beta subunit family. Heterotetramer of two alpha and two beta subunits. The cofactor is Mg(2+).

The catalysed reaction is succinate + ATP + CoA = succinyl-CoA + ADP + phosphate. The enzyme catalyses GTP + succinate + CoA = succinyl-CoA + GDP + phosphate. Its pathway is carbohydrate metabolism; tricarboxylic acid cycle; succinate from succinyl-CoA (ligase route): step 1/1. Succinyl-CoA synthetase functions in the citric acid cycle (TCA), coupling the hydrolysis of succinyl-CoA to the synthesis of either ATP or GTP and thus represents the only step of substrate-level phosphorylation in the TCA. The beta subunit provides nucleotide specificity of the enzyme and binds the substrate succinate, while the binding sites for coenzyme A and phosphate are found in the alpha subunit. In Rickettsia prowazekii (strain Madrid E), this protein is Succinate--CoA ligase [ADP-forming] subunit beta.